Here is a 106-residue protein sequence, read N- to C-terminus: Pyrimidine/purine nucleoside phosphorylase (106 aa).

This sequence belongs to the nucleoside phosphorylase PpnP family.

It carries out the reaction a purine D-ribonucleoside + phosphate = a purine nucleobase + alpha-D-ribose 1-phosphate. The catalysed reaction is adenosine + phosphate = alpha-D-ribose 1-phosphate + adenine. The enzyme catalyses cytidine + phosphate = cytosine + alpha-D-ribose 1-phosphate. It catalyses the reaction guanosine + phosphate = alpha-D-ribose 1-phosphate + guanine. It carries out the reaction inosine + phosphate = alpha-D-ribose 1-phosphate + hypoxanthine. The catalysed reaction is thymidine + phosphate = 2-deoxy-alpha-D-ribose 1-phosphate + thymine. The enzyme catalyses uridine + phosphate = alpha-D-ribose 1-phosphate + uracil. It catalyses the reaction xanthosine + phosphate = alpha-D-ribose 1-phosphate + xanthine. In terms of biological role, catalyzes the phosphorolysis of diverse nucleosides, yielding D-ribose 1-phosphate and the respective free bases. Can use uridine, adenosine, guanosine, cytidine, thymidine, inosine and xanthosine as substrates. Also catalyzes the reverse reactions. The protein is Pyrimidine/purine nucleoside phosphorylase of Paraburkholderia xenovorans (strain LB400).